The following is a 251-amino-acid chain: Triosephosphate isomerase (251 aa).

Substrate is bound at residue 10–12; sequence NWK. Residue His-98 is the Electrophile of the active site. Glu-169 (proton acceptor) is an active-site residue. Residues Gly-175, Ser-213, and 234 to 235 each bind substrate; that span reads GG.

The protein belongs to the triosephosphate isomerase family. In terms of assembly, homodimer.

The protein resides in the cytoplasm. The catalysed reaction is D-glyceraldehyde 3-phosphate = dihydroxyacetone phosphate. It participates in carbohydrate biosynthesis; gluconeogenesis. It functions in the pathway carbohydrate degradation; glycolysis; D-glyceraldehyde 3-phosphate from glycerone phosphate: step 1/1. Functionally, involved in the gluconeogenesis. Catalyzes stereospecifically the conversion of dihydroxyacetone phosphate (DHAP) to D-glyceraldehyde-3-phosphate (G3P). This Paracidovorax citrulli (strain AAC00-1) (Acidovorax citrulli) protein is Triosephosphate isomerase.